The primary structure comprises 81 residues: Putative sulfur carrier protein VNG_5061C/VNG_5236C/VNG_6059C/VNG_6467C (81 aa).

Cys18 functions as the Cysteine persulfide intermediate in the catalytic mechanism.

Belongs to the sulfur carrier protein TusA family.

The sequence is that of Putative sulfur carrier protein VNG_5061C/VNG_5236C/VNG_6059C/VNG_6467C from Halobacterium salinarum (strain ATCC 700922 / JCM 11081 / NRC-1) (Halobacterium halobium).